The primary structure comprises 416 residues: Cotranscriptional regulator ARB2A homolog (416 aa).

Positions 1–23 (MHFYFNVLNLLTVWVMMAQLQQG) are cleaved as a signal peptide. The disordered stretch occupies residues 211–248 (AQVQLSSDSSDEPAEKRERKDKIQKETKKRRDFYEKYR). The segment covering 223-236 (PAEKRERKDKIQKE) has biased composition (basic and acidic residues). The active-site Nucleophile is Ser293. N-linked (GlcNAc...) asparagine glycosylation occurs at Asn397.

This sequence belongs to the ARB2A family.

It is found in the nucleus. The protein localises to the cytoplasm. Functionally, may play role in the regulation of alternative splicing. May have hydrolase activity. The sequence is that of Cotranscriptional regulator ARB2A homolog (ARB2A) from Gallus gallus (Chicken).